The primary structure comprises 180 residues: uncharacterized protein (180 aa).

A disordered region spans residues 1–31 (MSTYEEEHGIQQNSRDYQEVGGTSQEEQRRQ). Serine 2 is modified (N-acetylserine). An RING-type zinc finger spans residues 109-153 (CSICYTNYLEDEYPLVVELPHCHHKFDLECLSVWLSRSTTCPLCR).

This is an uncharacterized protein from Saccharomyces cerevisiae (strain ATCC 204508 / S288c) (Baker's yeast).